Consider the following 556-residue polypeptide: Urease subunit alpha 1 (556 aa).

The Urease domain maps to 127–556 (GAVDTHVHLL…SVSLNRLYFL (430 aa)). His132, His134, and Lys212 together coordinate Ni(2+). At Lys212 the chain carries N6-carboxylysine. His214 lines the substrate pocket. The Ni(2+) site is built by His241 and His267. The active-site Proton donor is the His315. Residue Asp355 coordinates Ni(2+).

This sequence belongs to the metallo-dependent hydrolases superfamily. Urease alpha subunit family. In terms of assembly, may form a heterohexamer of 3 UreC (alpha) and 3 UreAB (gamma/beta) subunits. May also form a heterotrimer of UreA (gamma), UreB (beta) and UreC (alpha) subunits. Three heterotrimers associate to form the active enzyme. Ni cation serves as cofactor. Post-translationally, carboxylation allows a single lysine to coordinate two nickel ions.

It is found in the cytoplasm. It catalyses the reaction urea + 2 H2O + H(+) = hydrogencarbonate + 2 NH4(+). It functions in the pathway nitrogen metabolism; urea degradation; CO(2) and NH(3) from urea (urease route): step 1/1. This is Urease subunit alpha 1 from Streptomyces avermitilis (strain ATCC 31267 / DSM 46492 / JCM 5070 / NBRC 14893 / NCIMB 12804 / NRRL 8165 / MA-4680).